Here is a 573-residue protein sequence, read N- to C-terminus: Sulfite oxidase, mitochondrial (573 aa).

Residues 1–34 (MRLLRPSWAGLLRGRHHQHQRHHRRLLLTTSRGS) constitute a mitochondrion transit peptide. The segment covering 14–26 (GRHHQHQRHHRRL) has biased composition (basic residues). The disordered stretch occupies residues 14-50 (GRHHQHQRHHRRLLLTTSRGSNGEREEQQHSQWSSPG). The Cytochrome b5 heme-binding domain occupies 108 to 186 (LPTYRAEEVE…LEGFRIGNLE (79 aa)). Residues H144 and H168 each contribute to the heme b site. The segment at 190–199 (VTNVDDELGS) is hinge. The segment at 200–423 (PWSQEPQRHA…DSHWQQNDYK (224 aa)) is moco domain. Residues 240-244 (YVRNH), C287, D344, H383, R388, and 399-401 (NVK) each bind Mo-molybdopterin. The segment at 424–567 (GFSPSTDWDT…RGVLANAYHK (144 aa)) is homodimerization.

Heme b is required as a cofactor. Mo-molybdopterin serves as cofactor. As to expression, expressed in the ensheathing glia with relatively weak expression in the CNS cortex (at protein level).

Its subcellular location is the mitochondrion intermembrane space. It carries out the reaction sulfite + O2 + H2O = sulfate + H2O2. The protein operates within energy metabolism; sulfur metabolism. Required in ensheathing glial cells for normal larval locomotion. Oxidizes sulfite which is required to maintain glutamate homeostasis and as a consequence, neuronal network function. The sequence is that of Sulfite oxidase, mitochondrial from Drosophila melanogaster (Fruit fly).